The chain runs to 149 residues: MSITVNKKAFHDYFVEEKYEAGISLEGWEVKAIRAGRMNIKESYVIIKGGELFLIGMHISPLATASTHVSHDPTRTRKLLLHAKEISKLIGKVERAGYALVPLDLHFVRGRIKLEIGLAKGKKQHDKRADELDKDSKREAQRAMKERQR.

A disordered region spans residues 121–149; that stretch reads GKKQHDKRADELDKDSKREAQRAMKERQR. The segment covering 127-149 has biased composition (basic and acidic residues); the sequence is KRADELDKDSKREAQRAMKERQR.

This sequence belongs to the SmpB family.

It is found in the cytoplasm. Functionally, required for rescue of stalled ribosomes mediated by trans-translation. Binds to transfer-messenger RNA (tmRNA), required for stable association of tmRNA with ribosomes. tmRNA and SmpB together mimic tRNA shape, replacing the anticodon stem-loop with SmpB. tmRNA is encoded by the ssrA gene; the 2 termini fold to resemble tRNA(Ala) and it encodes a 'tag peptide', a short internal open reading frame. During trans-translation Ala-aminoacylated tmRNA acts like a tRNA, entering the A-site of stalled ribosomes, displacing the stalled mRNA. The ribosome then switches to translate the ORF on the tmRNA; the nascent peptide is terminated with the 'tag peptide' encoded by the tmRNA and targeted for degradation. The ribosome is freed to recommence translation, which seems to be the essential function of trans-translation. In Dechloromonas aromatica (strain RCB), this protein is SsrA-binding protein.